We begin with the raw amino-acid sequence, 162 residues long: Large ribosomal subunit protein uL15 (162 aa).

Basic and acidic residues predominate over residues 1 to 13; that stretch reads MKLNEIRDNEGAT. Residues 1-37 are disordered; that stretch reads MKLNEIRDNEGATKNRMRVGRGIGSGKGKTAGRGVKG. Positions 21 to 35 are enriched in gly residues; the sequence is RGIGSGKGKTAGRGV.

Belongs to the universal ribosomal protein uL15 family. As to quaternary structure, part of the 50S ribosomal subunit.

Functionally, binds to the 23S rRNA. This chain is Large ribosomal subunit protein uL15, found in Methylobacterium nodulans (strain LMG 21967 / CNCM I-2342 / ORS 2060).